We begin with the raw amino-acid sequence, 148 residues long: Arginine repressor (148 aa).

The protein belongs to the ArgR family.

It localises to the cytoplasm. It functions in the pathway amino-acid biosynthesis; L-arginine biosynthesis [regulation]. In terms of biological role, regulates arginine biosynthesis genes. This chain is Arginine repressor, found in Chloroherpeton thalassium (strain ATCC 35110 / GB-78).